The sequence spans 106 residues: UPF0213 protein VPA1222 (106 aa).

One can recognise a GIY-YIG domain in the interval 7 to 82 (QHWSVYLIRN…KQLTKSKKEQ (76 aa)).

Belongs to the UPF0213 family.

The chain is UPF0213 protein VPA1222 from Vibrio parahaemolyticus serotype O3:K6 (strain RIMD 2210633).